A 150-amino-acid polypeptide reads, in one-letter code: Cdc42 effector protein 5 (150 aa).

3 disordered regions span residues 1–20 (MPVMKQLGPAQPKKRLDRGA), 34–89 (LHVG…PADP), and 114–133 (SETTATKPDGDAHPRVQHPK). In terms of domain architecture, CRIB spans 23-37 (ISAPLGDFRHTLHVG). Arg38 carries the omega-N-methylarginine modification. Pro residues-rich tracts occupy residues 55–66 (GPPPEPGAPPVV) and 74–87 (PAAPQPPVAVPSPA). The segment covering 114-127 (SETTATKPDGDAHP) has biased composition (basic and acidic residues).

It belongs to the BORG/CEP family. Interacts with CDC42 in a GTP-dependent manner, and with SEPT7. Highly expressed in the skeletal muscle.

The protein resides in the endomembrane system. It localises to the cytoplasm. The protein localises to the cytoskeleton. In terms of biological role, probably involved in the organization of the actin cytoskeleton. May act downstream of CDC42 to induce actin filament assembly leading to cell shape changes. Induces pseudopodia formation in fibroblasts. Inhibits MAPK8 independently of CDC42 binding. Controls septin organization and this effect is negatively regulated by CDC42. In Mus musculus (Mouse), this protein is Cdc42 effector protein 5 (Cdc42ep5).